The primary structure comprises 275 residues: Methylglyoxal reductase DkgA (275 aa).

Tyr-51 (proton donor) is an active-site residue. Substrate is bound at residue His-107. Residue Ser-187–Asn-241 participates in NADP(+) binding.

This sequence belongs to the aldo/keto reductase family. As to quaternary structure, monomer.

It is found in the cytoplasm. It catalyses the reaction hydroxyacetone + NADP(+) = methylglyoxal + NADPH + H(+). Its function is as follows. Aldo-keto reductase that significantly contributes to cellular methylglyoxal detoxification by catalyzing the NADPH-dependent conversion of methylglyoxal to acetol. The polypeptide is Methylglyoxal reductase DkgA (Salmonella typhimurium (strain LT2 / SGSC1412 / ATCC 700720)).